The following is a 149-amino-acid chain: Flagellar assembly factor FliW (149 aa).

This sequence belongs to the FliW family. As to quaternary structure, interacts with translational regulator CsrA and flagellin(s).

The protein resides in the cytoplasm. Acts as an anti-CsrA protein, binds CsrA and prevents it from repressing translation of its target genes, one of which is flagellin. Binds to flagellin and participates in the assembly of the flagellum. The sequence is that of Flagellar assembly factor FliW from Thermotoga petrophila (strain ATCC BAA-488 / DSM 13995 / JCM 10881 / RKU-1).